A 481-amino-acid chain; its full sequence is Glutamate--tRNA ligase (481 aa).

A 'HIGH' region motif is present at residues 28–38 (PSPTGFLHLGG). The segment covering 139-148 (RYDGTWRPEP) has biased composition (basic and acidic residues). A disordered region spans residues 139 to 159 (RYDGTWRPEPGKTLPPVPADR). A 'KMSKS' region motif is present at residues 260–264 (KLSKR). Lys-263 contributes to the ATP binding site.

Belongs to the class-I aminoacyl-tRNA synthetase family. Glutamate--tRNA ligase type 1 subfamily. As to quaternary structure, monomer.

It localises to the cytoplasm. The catalysed reaction is tRNA(Glu) + L-glutamate + ATP = L-glutamyl-tRNA(Glu) + AMP + diphosphate. Catalyzes the attachment of glutamate to tRNA(Glu) in a two-step reaction: glutamate is first activated by ATP to form Glu-AMP and then transferred to the acceptor end of tRNA(Glu). This is Glutamate--tRNA ligase from Bordetella parapertussis (strain 12822 / ATCC BAA-587 / NCTC 13253).